Consider the following 384-residue polypeptide: Lipoyl synthase 2, chloroplastic (384 aa).

The N-terminal 48 residues, 1–48 (MAAYCSRVYHHHPVSPSTMQGSLARPSIHAGSASLTFRARPNSVSIVR), are a transit peptide targeting the chloroplast. [4Fe-4S] cluster is bound by residues C108, C113, C119, C145, C149, C152, and S360. The Radical SAM core domain maps to 128-349 (GDGDGIATAT…KEYGESLGFL (222 aa)).

Belongs to the radical SAM superfamily. Lipoyl synthase family. Requires [4Fe-4S] cluster as cofactor.

It localises to the plastid. The protein localises to the chloroplast. The enzyme catalyses [[Fe-S] cluster scaffold protein carrying a second [4Fe-4S](2+) cluster] + N(6)-octanoyl-L-lysyl-[protein] + 2 oxidized [2Fe-2S]-[ferredoxin] + 2 S-adenosyl-L-methionine + 4 H(+) = [[Fe-S] cluster scaffold protein] + N(6)-[(R)-dihydrolipoyl]-L-lysyl-[protein] + 4 Fe(3+) + 2 hydrogen sulfide + 2 5'-deoxyadenosine + 2 L-methionine + 2 reduced [2Fe-2S]-[ferredoxin]. It functions in the pathway protein modification; protein lipoylation via endogenous pathway; protein N(6)-(lipoyl)lysine from octanoyl-[acyl-carrier-protein]: step 2/2. In terms of biological role, catalyzes the radical-mediated insertion of two sulfur atoms into the C-6 and C-8 positions of the octanoyl moiety bound to the lipoyl domains of lipoate-dependent enzymes, thereby converting the octanoylated domains into lipoylated derivatives. The sequence is that of Lipoyl synthase 2, chloroplastic from Oryza sativa subsp. indica (Rice).